Reading from the N-terminus, the 899-residue chain is Probable dipeptidyl-aminopeptidase B (899 aa).

A disordered region spans residues 1-69 (MKLDRMRVGS…NHNGRTQGNY (69 aa)). Topologically, residues 1–99 (MKLDRMRVGS…NGKSSQRRTL (99 aa)) are cytoplasmic. A compositionally biased stretch (low complexity) spans 32–43 (DSSSTASISLTL). Residues 100–120 (IVFWLLVALCVGGWAVAFLFF) traverse the membrane as a helical; Signal-anchor for type II membrane protein segment. Residues 121 to 899 (VTSPGNKTST…KYFNLSFLGH (779 aa)) are Vacuolar-facing. Positions 128-139 (TSTSPHSGSNSP) are enriched in polar residues. The segment at 128 to 149 (TSTSPHSGSNSPEGDVTKPGIP) is disordered. Asn-212, Asn-308, and Asn-360 each carry an N-linked (GlcNAc...) asparagine glycan. The active-site Charge relay system is Ser-765. Asn-819, Asn-824, and Asn-827 each carry an N-linked (GlcNAc...) asparagine glycan. Active-site charge relay system residues include Asp-842 and His-875. Asn-893 carries N-linked (GlcNAc...) asparagine glycosylation.

It belongs to the peptidase S9B family.

It is found in the vacuole membrane. It catalyses the reaction Release of an N-terminal dipeptide, Xaa-Yaa-|-Zaa-, from a polypeptide, preferentially when Yaa is Pro, provided Zaa is neither Pro nor hydroxyproline.. Functionally, type IV dipeptidyl-peptidase which removes N-terminal dipeptides sequentially from polypeptides having unsubstituted N-termini provided that the penultimate residue is proline. The chain is Probable dipeptidyl-aminopeptidase B (DAPB) from Trichophyton verrucosum (strain HKI 0517).